The sequence spans 240 residues: Ribose-5-phosphate isomerase (240 aa).

Substrate is bound by residues S34 to T37, D88 to D91, and K101 to G104. The Proton acceptor role is filled by E110. A substrate-binding site is contributed by K128.

The protein belongs to the ribose 5-phosphate isomerase family.

It is found in the cytoplasm. The catalysed reaction is aldehydo-D-ribose 5-phosphate = D-ribulose 5-phosphate. Its pathway is carbohydrate degradation; pentose phosphate pathway; D-ribose 5-phosphate from D-ribulose 5-phosphate (non-oxidative stage): step 1/1. Functionally, involved in the first step of the non-oxidative branch of the pentose phosphate pathway. It catalyzes the reversible conversion of ribose-5-phosphate to ribulose 5-phosphate. The sequence is that of Ribose-5-phosphate isomerase (RKI1) from Candida albicans (strain SC5314 / ATCC MYA-2876) (Yeast).